A 539-amino-acid polypeptide reads, in one-letter code: Phosphoenolpyruvate carboxykinase (ATP) (539 aa).

Positions 64, 206, and 212 each coordinate substrate. Residues K212, H231, and 247–255 (GLSGTGKTT) contribute to the ATP site. Mn(2+)-binding residues include K212 and H231. D268 contributes to the Mn(2+) binding site. ATP-binding positions include E296, R332, 448–449 (RI), and T454. Residue R332 participates in substrate binding.

This sequence belongs to the phosphoenolpyruvate carboxykinase (ATP) family. As to quaternary structure, monomer. Mn(2+) serves as cofactor.

Its subcellular location is the cytoplasm. The catalysed reaction is oxaloacetate + ATP = phosphoenolpyruvate + ADP + CO2. The protein operates within carbohydrate biosynthesis; gluconeogenesis. In terms of biological role, involved in the gluconeogenesis. Catalyzes the conversion of oxaloacetate (OAA) to phosphoenolpyruvate (PEP) through direct phosphoryl transfer between the nucleoside triphosphate and OAA. This chain is Phosphoenolpyruvate carboxykinase (ATP), found in Edwardsiella ictaluri (strain 93-146).